The sequence spans 289 residues: ATP synthase gamma chain (289 aa).

Belongs to the ATPase gamma chain family. F-type ATPases have 2 components, CF(1) - the catalytic core - and CF(0) - the membrane proton channel. CF(1) has five subunits: alpha(3), beta(3), gamma(1), delta(1), epsilon(1). CF(0) has three main subunits: a, b and c.

It is found in the cell inner membrane. Its function is as follows. Produces ATP from ADP in the presence of a proton gradient across the membrane. The gamma chain is believed to be important in regulating ATPase activity and the flow of protons through the CF(0) complex. This is ATP synthase gamma chain from Pasteurella multocida (strain Pm70).